A 343-amino-acid chain; its full sequence is UDP-3-O-acylglucosamine N-acyltransferase 2 (343 aa).

H251 acts as the Proton acceptor in catalysis.

It belongs to the transferase hexapeptide repeat family. LpxD subfamily. As to quaternary structure, homotrimer.

It carries out the reaction a UDP-3-O-[(3R)-3-hydroxyacyl]-alpha-D-glucosamine + a (3R)-hydroxyacyl-[ACP] = a UDP-2-N,3-O-bis[(3R)-3-hydroxyacyl]-alpha-D-glucosamine + holo-[ACP] + H(+). It functions in the pathway bacterial outer membrane biogenesis; LPS lipid A biosynthesis. Functionally, catalyzes the N-acylation of UDP-3-O-acylglucosamine using 3-hydroxyacyl-ACP as the acyl donor. Is involved in the biosynthesis of lipid A, a phosphorylated glycolipid that anchors the lipopolysaccharide to the outer membrane of the cell. This is UDP-3-O-acylglucosamine N-acyltransferase 2 from Legionella pneumophila (strain Paris).